The sequence spans 320 residues: Ribose-phosphate pyrophosphokinase (320 aa).

ATP is bound at residue 41-43; it reads NDN. The Mg(2+) site is built by H134 and D175. Residue K198 is part of the active site. The D-ribose 5-phosphate site is built by R200 and D224.

The protein belongs to the ribose-phosphate pyrophosphokinase family. Class I subfamily. In terms of assembly, homohexamer. Mg(2+) serves as cofactor.

It is found in the cytoplasm. The catalysed reaction is D-ribose 5-phosphate + ATP = 5-phospho-alpha-D-ribose 1-diphosphate + AMP + H(+). Its pathway is metabolic intermediate biosynthesis; 5-phospho-alpha-D-ribose 1-diphosphate biosynthesis; 5-phospho-alpha-D-ribose 1-diphosphate from D-ribose 5-phosphate (route I): step 1/1. In terms of biological role, involved in the biosynthesis of the central metabolite phospho-alpha-D-ribosyl-1-pyrophosphate (PRPP) via the transfer of pyrophosphoryl group from ATP to 1-hydroxyl of ribose-5-phosphate (Rib-5-P). The sequence is that of Ribose-phosphate pyrophosphokinase from Deinococcus radiodurans (strain ATCC 13939 / DSM 20539 / JCM 16871 / CCUG 27074 / LMG 4051 / NBRC 15346 / NCIMB 9279 / VKM B-1422 / R1).